The sequence spans 299 residues: UPF0282 protein TK1681 (299 aa).

This sequence belongs to the UPF0282 family.

This chain is UPF0282 protein TK1681, found in Thermococcus kodakarensis (strain ATCC BAA-918 / JCM 12380 / KOD1) (Pyrococcus kodakaraensis (strain KOD1)).